A 177-amino-acid polypeptide reads, in one-letter code: Large ribosomal subunit protein uL6 (177 aa).

It belongs to the universal ribosomal protein uL6 family. As to quaternary structure, part of the 50S ribosomal subunit.

This protein binds to the 23S rRNA, and is important in its secondary structure. It is located near the subunit interface in the base of the L7/L12 stalk, and near the tRNA binding site of the peptidyltransferase center. This is Large ribosomal subunit protein uL6 from Allorhizobium ampelinum (strain ATCC BAA-846 / DSM 112012 / S4) (Agrobacterium vitis (strain S4)).